The primary structure comprises 206 residues: Dephospho-CoA kinase (206 aa).

The region spanning 4–200 (IVALTGGIGS…HRYLKLATAA (197 aa)) is the DPCK domain. Residue 12 to 17 (GSGKST) participates in ATP binding.

It belongs to the CoaE family.

Its subcellular location is the cytoplasm. It catalyses the reaction 3'-dephospho-CoA + ATP = ADP + CoA + H(+). It functions in the pathway cofactor biosynthesis; coenzyme A biosynthesis; CoA from (R)-pantothenate: step 5/5. Its function is as follows. Catalyzes the phosphorylation of the 3'-hydroxyl group of dephosphocoenzyme A to form coenzyme A. This chain is Dephospho-CoA kinase, found in Yersinia pestis.